The primary structure comprises 289 residues: Acetyl-coenzyme A carboxylase carboxyl transferase subunit beta (289 aa).

The CoA carboxyltransferase N-terminal domain maps to 28-289 (VMTKCPKCKK…QGGGMAVWQS (262 aa)). C32, C35, C51, and C54 together coordinate Zn(2+). The C4-type zinc finger occupies 32-54 (CPKCKKIMYTKELLKNLKVCVNC).

This sequence belongs to the AccD/PCCB family. In terms of assembly, acetyl-CoA carboxylase is a heterohexamer composed of biotin carboxyl carrier protein (AccB), biotin carboxylase (AccC) and two subunits each of ACCase subunit alpha (AccA) and ACCase subunit beta (AccD). Zn(2+) is required as a cofactor.

Its subcellular location is the cytoplasm. It carries out the reaction N(6)-carboxybiotinyl-L-lysyl-[protein] + acetyl-CoA = N(6)-biotinyl-L-lysyl-[protein] + malonyl-CoA. It functions in the pathway lipid metabolism; malonyl-CoA biosynthesis; malonyl-CoA from acetyl-CoA: step 1/1. Component of the acetyl coenzyme A carboxylase (ACC) complex. Biotin carboxylase (BC) catalyzes the carboxylation of biotin on its carrier protein (BCCP) and then the CO(2) group is transferred by the transcarboxylase to acetyl-CoA to form malonyl-CoA. This chain is Acetyl-coenzyme A carboxylase carboxyl transferase subunit beta, found in Bacillus mycoides (strain KBAB4) (Bacillus weihenstephanensis).